Here is a 514-residue protein sequence, read N- to C-terminus: ATP synthase subunit alpha (514 aa).

170–177 serves as a coordination point for ATP; the sequence is GDRQIGKT.

Belongs to the ATPase alpha/beta chains family. As to quaternary structure, F-type ATPases have 2 components, CF(1) - the catalytic core - and CF(0) - the membrane proton channel. CF(1) has five subunits: alpha(3), beta(3), gamma(1), delta(1), epsilon(1). CF(0) has three main subunits: a(1), b(2) and c(9-12). The alpha and beta chains form an alternating ring which encloses part of the gamma chain. CF(1) is attached to CF(0) by a central stalk formed by the gamma and epsilon chains, while a peripheral stalk is formed by the delta and b chains.

The protein localises to the cell inner membrane. The enzyme catalyses ATP + H2O + 4 H(+)(in) = ADP + phosphate + 5 H(+)(out). Produces ATP from ADP in the presence of a proton gradient across the membrane. The alpha chain is a regulatory subunit. The polypeptide is ATP synthase subunit alpha (Pseudomonas syringae pv. tomato (strain ATCC BAA-871 / DC3000)).